We begin with the raw amino-acid sequence, 88 residues long: Small ribosomal subunit protein uS17 (88 aa).

Belongs to the universal ribosomal protein uS17 family. In terms of assembly, part of the 30S ribosomal subunit.

In terms of biological role, one of the primary rRNA binding proteins, it binds specifically to the 5'-end of 16S ribosomal RNA. This is Small ribosomal subunit protein uS17 from Prochlorococcus marinus (strain MIT 9215).